The following is a 134-amino-acid chain: Ribosome-binding factor A (134 aa).

The protein belongs to the RbfA family. In terms of assembly, monomer. Binds 30S ribosomal subunits, but not 50S ribosomal subunits or 70S ribosomes.

It is found in the cytoplasm. In terms of biological role, one of several proteins that assist in the late maturation steps of the functional core of the 30S ribosomal subunit. Associates with free 30S ribosomal subunits (but not with 30S subunits that are part of 70S ribosomes or polysomes). Required for efficient processing of 16S rRNA. May interact with the 5'-terminal helix region of 16S rRNA. This Psychrobacter arcticus (strain DSM 17307 / VKM B-2377 / 273-4) protein is Ribosome-binding factor A.